We begin with the raw amino-acid sequence, 57 residues long: MAVPKRRMSRSNTRSRRSQWKATATELVNVTVGGQNHKVPRRLLKAARLGLIDLDRR.

A compositionally biased stretch (basic residues) spans 1–19; that stretch reads MAVPKRRMSRSNTRSRRSQ. Residues 1-21 form a disordered region; sequence MAVPKRRMSRSNTRSRRSQWK.

It belongs to the bacterial ribosomal protein bL32 family.

The sequence is that of Large ribosomal subunit protein bL32 from Mycobacteroides abscessus (strain ATCC 19977 / DSM 44196 / CCUG 20993 / CIP 104536 / JCM 13569 / NCTC 13031 / TMC 1543 / L948) (Mycobacterium abscessus).